The chain runs to 163 residues: Disulfide bond formation protein B (163 aa).

The Cytoplasmic segment spans residues 1–9 (MKKLTYRKI). Residues 10-26 (QSFQAIITVLVIFASFY) form a helical membrane-spanning segment. The Periplasmic portion of the chain corresponds to 27–44 (LEYAAGLQPCPLCLMQRV). Residues Cys36 and Cys39 are joined by a disulfide bond. Residues 45-58 (CVFILLGLMGVSLG) form a helical membrane-spanning segment. Over 59–64 (TVKKAH) the chain is Cytoplasmic. The helical transmembrane segment at 65–82 (IVSLIQFQVACAGLYFSL) threads the bilayer. Topologically, residues 83 to 139 (RQLWLQSLPSDQAPACMPGLDVLIQYFPWQTVAKALFWGAGDCAEVTWTMFGVSMPG) are periplasmic. Cys98 and Cys125 are oxidised to a cystine. A helical membrane pass occupies residues 140–158 (WAAMYFLSMAIMGLFLFFR). At 159-163 (TRTIN) the chain is on the cytoplasmic side.

Belongs to the DsbB family.

It localises to the cell inner membrane. In terms of biological role, required for disulfide bond formation in some periplasmic proteins. Acts by oxidizing the DsbA protein. The protein is Disulfide bond formation protein B of Legionella pneumophila (strain Lens).